The primary structure comprises 1876 residues: Phenolphthiocerol/phthiocerol polyketide synthase subunit A (1876 aa).

Residues 9 to 83 (ADLRHWLIDY…ALAAYLAAPE (75 aa)) enclose the Carrier 1 domain. O-(pantetheine 4'-phosphoryl)serine is present on serine 43. Positions 101-526 (DEPIAVVGMG…GTNAHVVIEQ (426 aa)) constitute a Ketosynthase family 3 (KS3) domain. Catalysis depends on for beta-ketoacyl synthase activity residues cysteine 273, histidine 408, and histidine 448. The segment at 626-950 (SPGPGTVFVY…NLNKAHTIHP (325 aa)) is acyltransferase. Serine 720 (for malonyltransferase activity) is an active-site residue. The interval 997 to 1112 (HTTVATVSAS…AQLSSSPSDS (116 aa)) is N-terminal hotdog fold. The PKS/mFAS DH domain occupies 997 to 1267 (HTTVATVSAS…YRALDFGLDV (271 aa)). The Proton acceptor; for dehydratase activity role is filled by histidine 1027. The interval 1102 to 1130 (TAQLSSSPSDSASSLNEHHRANGQPPERA) is disordered. Low complexity predominate over residues 1106–1115 (SSSPSDSASS). The C-terminal hotdog fold stretch occupies residues 1130–1267 (AHRDLIPDLA…YRALDFGLDV (138 aa)). Catalysis depends on aspartate 1186, which acts as the Proton donor; for dehydratase activity. 1491–1551 (AAYLITGGLG…RRRIDAIRAL (61 aa)) contacts NADP(+). The tract at residues 1491 to 1728 (AAYLITGGLG…DGYDVAQAVV (238 aa)) is beta-ketoacyl reductase. The region spanning 1759 to 1836 (EVRSELEQGL…SLASYLAKRV (78 aa)) is the Carrier 2 domain. O-(pantetheine 4'-phosphoryl)serine is present on serine 1796.

It depends on NADP(+) as a cofactor. Requires pantetheine 4'-phosphate as cofactor.

The enzyme catalyses icosanoyl-[(phenol)carboxyphthiodiolenone synthase] + 2 (S)-methylmalonyl-CoA + 3 malonyl-CoA + 5 NADPH + 10 H(+) = C32-carboxyphthiodiolenone-[(phenol)carboxyphthiodiolenone synthase] + 5 CO2 + 5 NADP(+) + 5 CoA + 2 H2O. It catalyses the reaction docosanoyl-[(phenol)carboxyphthiodiolenone synthase] + 2 (S)-methylmalonyl-CoA + 3 malonyl-CoA + 5 NADPH + 10 H(+) = C34-carboxyphthiodiolenone-[(phenol)carboxyphthiodiolenone synthase] + 5 CO2 + 5 NADP(+) + 5 CoA + 2 H2O. The catalysed reaction is 17-(4-hydroxyphenyl)heptadecanoyl-[(phenol)carboxyphthiodiolenone synthase] + 2 (S)-methylmalonyl-CoA + 3 malonyl-CoA + 5 NADPH + 10 H(+) = C35-(phenol)carboxyphthiodiolenone-[(phenol)carboxyphthiodiolenone synthase] + 5 CO2 + 5 NADP(+) + 5 CoA + 2 H2O. It carries out the reaction 19-(4-hydroxyphenyl)nonadecanoyl-[(phenol)carboxyphthiodiolenone synthase] + 2 (S)-methylmalonyl-CoA + 3 malonyl-CoA + 5 NADPH + 10 H(+) = C37-(phenol)carboxyphthiodiolenone-[(phenol)carboxyphthiodiolenone synthase] + 5 CO2 + 5 NADP(+) + 5 CoA + 2 H2O. It functions in the pathway lipid metabolism; fatty acid biosynthesis. In terms of biological role, part of the PpsABCDE complex involved in the biosynthesis of the lipid core common to phthiocerols and phenolphthiocerols by successive additions of malonyl-CoA or methylmalonyl-CoA extender units. PpsA can accept as substrate the activated forms of either icosanoyl (C20), docosanoyl (C22) or lignoceroyl (C24) groups from FadD26, or a (4-hydroxyphenyl)-C17 or (4-hydroxyphenyl)-C19 fatty acyl from FadD29. PpsA initiates the biosynthesis and extends its substrate using a malonyl-CoA extender unit. The PpsB and PpsC proteins add the second and third malonyl-CoA extender units. PpsD adds an (R)-methylmalonyl unit and PpsE adds a second (R)-methylmalonyl unit. The incorporation of the methylmalonyl units results in formation of two branched methyl groups in the elongated product. The polypeptide is Phenolphthiocerol/phthiocerol polyketide synthase subunit A (ppsA) (Mycobacterium tuberculosis (strain CDC 1551 / Oshkosh)).